Reading from the N-terminus, the 235-residue chain is 5'-methylthioadenosine/S-adenosylhomocysteine nucleosidase (235 aa).

The active-site Proton acceptor is Glu13. Substrate-binding positions include Gly79, Met154, and 175 to 176; that span reads ME. Catalysis depends on Asp199, which acts as the Proton donor.

This sequence belongs to the PNP/UDP phosphorylase family. MtnN subfamily.

The enzyme catalyses S-adenosyl-L-homocysteine + H2O = S-(5-deoxy-D-ribos-5-yl)-L-homocysteine + adenine. It carries out the reaction S-methyl-5'-thioadenosine + H2O = 5-(methylsulfanyl)-D-ribose + adenine. It catalyses the reaction 5'-deoxyadenosine + H2O = 5-deoxy-D-ribose + adenine. It participates in amino-acid biosynthesis; L-methionine biosynthesis via salvage pathway; S-methyl-5-thio-alpha-D-ribose 1-phosphate from S-methyl-5'-thioadenosine (hydrolase route): step 1/2. Its function is as follows. Catalyzes the irreversible cleavage of the glycosidic bond in both 5'-methylthioadenosine (MTA) and S-adenosylhomocysteine (SAH/AdoHcy) to adenine and the corresponding thioribose, 5'-methylthioribose and S-ribosylhomocysteine, respectively. Also cleaves 5'-deoxyadenosine, a toxic by-product of radical S-adenosylmethionine (SAM) enzymes, into 5-deoxyribose and adenine. The sequence is that of 5'-methylthioadenosine/S-adenosylhomocysteine nucleosidase from Chromohalobacter salexigens (strain ATCC BAA-138 / DSM 3043 / CIP 106854 / NCIMB 13768 / 1H11).